The sequence spans 313 residues: Urease accessory protein UreD (313 aa).

The disordered stretch occupies residues 1–30; the sequence is MTDLSFPGQAASPGEGAGQTPSGGSGHRFD. Residues 15–26 show a composition bias toward gly residues; the sequence is EGAGQTPSGGSG.

It belongs to the UreD family. In terms of assembly, ureD, UreF and UreG form a complex that acts as a GTP-hydrolysis-dependent molecular chaperone, activating the urease apoprotein by helping to assemble the nickel containing metallocenter of UreC. The UreE protein probably delivers the nickel.

The protein localises to the cytoplasm. In terms of biological role, required for maturation of urease via the functional incorporation of the urease nickel metallocenter. This Chromohalobacter salexigens (strain ATCC BAA-138 / DSM 3043 / CIP 106854 / NCIMB 13768 / 1H11) protein is Urease accessory protein UreD.